Reading from the N-terminus, the 269-residue chain is Ribosomal RNA large subunit methyltransferase E (269 aa).

S-adenosyl-L-methionine-binding residues include Gly48, Trp50, Asp68, Asp86, and Asp111. Residue Lys151 is the Proton acceptor of the active site. The region spanning Pro198–Asp256 is the TRAM domain.

Belongs to the class I-like SAM-binding methyltransferase superfamily. RNA methyltransferase RlmE family.

The protein resides in the cytoplasm. The catalysed reaction is uridine(2552) in 23S rRNA + S-adenosyl-L-methionine = 2'-O-methyluridine(2552) in 23S rRNA + S-adenosyl-L-homocysteine + H(+). Functionally, specifically methylates the uridine in position 2552 of 23S rRNA at the 2'-O position of the ribose in the fully assembled 50S ribosomal subunit. This is Ribosomal RNA large subunit methyltransferase E from Halorubrum lacusprofundi (strain ATCC 49239 / DSM 5036 / JCM 8891 / ACAM 34).